Here is a 149-residue protein sequence, read N- to C-terminus: Large ribosomal subunit protein bL9 (149 aa).

Belongs to the bacterial ribosomal protein bL9 family.

In terms of biological role, binds to the 23S rRNA. The protein is Large ribosomal subunit protein bL9 of Bacillus velezensis (strain DSM 23117 / BGSC 10A6 / LMG 26770 / FZB42) (Bacillus amyloliquefaciens subsp. plantarum).